A 315-amino-acid polypeptide reads, in one-letter code: Methionyl-tRNA formyltransferase (315 aa).

113–116 (SILP) contributes to the (6S)-5,6,7,8-tetrahydrofolate binding site.

It belongs to the Fmt family.

The catalysed reaction is L-methionyl-tRNA(fMet) + (6R)-10-formyltetrahydrofolate = N-formyl-L-methionyl-tRNA(fMet) + (6S)-5,6,7,8-tetrahydrofolate + H(+). In terms of biological role, attaches a formyl group to the free amino group of methionyl-tRNA(fMet). The formyl group appears to play a dual role in the initiator identity of N-formylmethionyl-tRNA by promoting its recognition by IF2 and preventing the misappropriation of this tRNA by the elongation apparatus. The chain is Methionyl-tRNA formyltransferase from Vibrio vulnificus (strain YJ016).